Consider the following 431-residue polypeptide: Hydroxylamine reductase (431 aa).

The [4Fe-4S] cluster site is built by Cys5, Cys8, Cys17, and Cys23. Positions 131, 155, 199, 286, 314, 339, 373, and 375 each coordinate hybrid [4Fe-2O-2S] cluster. The residue at position 286 (Cys286) is a Cysteine persulfide.

It belongs to the HCP family. It depends on [4Fe-4S] cluster as a cofactor. Hybrid [4Fe-2O-2S] cluster is required as a cofactor.

The protein localises to the cytoplasm. It catalyses the reaction A + NH4(+) + H2O = hydroxylamine + AH2 + H(+). Functionally, catalyzes the reduction of hydroxylamine to form NH(3) and H(2)O. This Thermotoga petrophila (strain ATCC BAA-488 / DSM 13995 / JCM 10881 / RKU-1) protein is Hydroxylamine reductase.